The following is a 211-amino-acid chain: Transmembrane protein 247 (211 aa).

Composition is skewed to basic and acidic residues over residues 1–10 (MAMEDREVME) and 31–45 (PEGK…EVPK). The tract at residues 1-90 (MAMEDREVME…AGDGPGLESV (90 aa)) is disordered. Residues 63–73 (PGPPRSLPPKS) are compositionally biased toward pro residues. Residues 119–148 (KYLHQENERQRQHEEVMEQLQQQQQQQQAL) adopt a coiled-coil conformation. 2 consecutive transmembrane segments (helical) span residues 159 to 179 (LLLP…IHII) and 186 to 206 (VFFL…LCLI).

The protein localises to the membrane. This chain is Transmembrane protein 247 (Tmem247), found in Mus musculus (Mouse).